The chain runs to 316 residues: L-lactate dehydrogenase (316 aa).

Residues Val-15, Asp-37, Lys-42, Tyr-68, and 82–83 (GL) contribute to the NAD(+) site. Residues Gln-85, Arg-91, and 123-126 (NPVD) each bind substrate. NAD(+) is bound by residues 121 to 123 (ASN) and Thr-146. 151–154 (DTSR) lines the substrate pocket. Beta-D-fructose 1,6-bisphosphate contacts are provided by Arg-156 and His-171. His-178 serves as the catalytic Proton acceptor. Tyr-222 is modified (phosphotyrosine). Thr-231 is a substrate binding site.

This sequence belongs to the LDH/MDH superfamily. LDH family. As to quaternary structure, homotetramer.

Its subcellular location is the cytoplasm. The catalysed reaction is (S)-lactate + NAD(+) = pyruvate + NADH + H(+). It participates in fermentation; pyruvate fermentation to lactate; (S)-lactate from pyruvate: step 1/1. Allosterically activated by fructose 1,6-bisphosphate (FBP). Functionally, catalyzes the conversion of lactate to pyruvate. In Borrelia hermsii (strain HS1 / DAH), this protein is L-lactate dehydrogenase.